Here is a 1008-residue protein sequence, read N- to C-terminus: Probable beta-galactosidase B (1008 aa).

An N-terminal signal peptide occupies residues 1–18; sequence MLLQSLFAWALAIGPCIA. Residues N20 and N23 are each glycosylated (N-linked (GlcNAc...) asparagine). Substrate is bound at residue Y87. An N-linked (GlcNAc...) asparagine glycan is attached at N108. N132, A133, E134, and N192 together coordinate substrate. Residue E193 is the Proton donor of the active site. The N-linked (GlcNAc...) asparagine glycan is linked to N208. Y262 is a binding site for substrate. An intrachain disulfide couples C268 to C321. An N-linked (GlcNAc...) asparagine glycan is attached at N269. The Nucleophile role is filled by E305. Residue Y370 coordinates substrate. Residues N453, N594, N624, N681, N703, N782, N788, N816, N826, and N879 are each glycosylated (N-linked (GlcNAc...) asparagine).

This sequence belongs to the glycosyl hydrolase 35 family.

The protein localises to the secreted. It catalyses the reaction Hydrolysis of terminal non-reducing beta-D-galactose residues in beta-D-galactosides.. In terms of biological role, cleaves beta-linked terminal galactosyl residues from gangliosides, glycoproteins, and glycosaminoglycans. This is Probable beta-galactosidase B (lacB) from Sclerotinia sclerotiorum (strain ATCC 18683 / 1980 / Ss-1) (White mold).